We begin with the raw amino-acid sequence, 374 residues long: Dihydroorotate dehydrogenase (quinone) (374 aa).

FMN contacts are provided by residues 78–82 and T102; that span reads AGFDK. K82 contacts substrate. Position 127-131 (127-131) interacts with substrate; that stretch reads NRMGF. N159 and N192 together coordinate FMN. N192 provides a ligand contact to substrate. S195 (nucleophile) is an active-site residue. N197 provides a ligand contact to substrate. FMN-binding residues include K230 and T258. Position 259–260 (259–260) interacts with substrate; that stretch reads NT. FMN-binding positions include G287, G316, and 337 to 338; that span reads YT.

It belongs to the dihydroorotate dehydrogenase family. Type 2 subfamily. As to quaternary structure, monomer. It depends on FMN as a cofactor.

The protein resides in the cell membrane. The catalysed reaction is (S)-dihydroorotate + a quinone = orotate + a quinol. Its pathway is pyrimidine metabolism; UMP biosynthesis via de novo pathway; orotate from (S)-dihydroorotate (quinone route): step 1/1. Its function is as follows. Catalyzes the conversion of dihydroorotate to orotate with quinone as electron acceptor. In Acaryochloris marina (strain MBIC 11017), this protein is Dihydroorotate dehydrogenase (quinone).